We begin with the raw amino-acid sequence, 175 residues long: Crossover junction endodeoxyribonuclease RuvC (175 aa).

Active-site residues include Asp8, Glu67, and Asp139. Asp8, Glu67, and Asp139 together coordinate Mg(2+).

Belongs to the RuvC family. In terms of assembly, homodimer which binds Holliday junction (HJ) DNA. The HJ becomes 2-fold symmetrical on binding to RuvC with unstacked arms; it has a different conformation from HJ DNA in complex with RuvA. In the full resolvosome a probable DNA-RuvA(4)-RuvB(12)-RuvC(2) complex forms which resolves the HJ. Mg(2+) serves as cofactor.

The protein localises to the cytoplasm. It carries out the reaction Endonucleolytic cleavage at a junction such as a reciprocal single-stranded crossover between two homologous DNA duplexes (Holliday junction).. Its function is as follows. The RuvA-RuvB-RuvC complex processes Holliday junction (HJ) DNA during genetic recombination and DNA repair. Endonuclease that resolves HJ intermediates. Cleaves cruciform DNA by making single-stranded nicks across the HJ at symmetrical positions within the homologous arms, yielding a 5'-phosphate and a 3'-hydroxyl group; requires a central core of homology in the junction. The consensus cleavage sequence is 5'-(A/T)TT(C/G)-3'. Cleavage occurs on the 3'-side of the TT dinucleotide at the point of strand exchange. HJ branch migration catalyzed by RuvA-RuvB allows RuvC to scan DNA until it finds its consensus sequence, where it cleaves and resolves the cruciform DNA. The sequence is that of Crossover junction endodeoxyribonuclease RuvC from Marinobacter nauticus (strain ATCC 700491 / DSM 11845 / VT8) (Marinobacter aquaeolei).